Here is a 313-residue protein sequence, read N- to C-terminus: Probable cytochrome c oxidase subunit 2 (313 aa).

An RPE1 insert domain is found at 5 to 51; it reads RYWSKQSYKKLKVDQEHNTTEYTNVCNSTSLGSTYTLPLKMELWKIY. A run of 3 helical transmembrane segments spans residues 39-59, 94-114, and 131-151; these read YTLP…YFLI, LLYI…FVCI, and LLIE…IAVP. Cu cation is bound by residues His233, Cys268, Cys272, and His276.

It belongs to the cytochrome c oxidase subunit 2 family. The cofactor is Cu cation. Heme serves as cofactor.

Its subcellular location is the cell membrane. It carries out the reaction 4 Fe(II)-[cytochrome c] + O2 + 8 H(+)(in) = 4 Fe(III)-[cytochrome c] + 2 H2O + 4 H(+)(out). Subunits I and II form the functional core of the enzyme complex. Electrons originating in cytochrome c are transferred via heme a and Cu(A) to the binuclear center formed by heme a3 and Cu(B). The protein is Probable cytochrome c oxidase subunit 2 (ctaC) of Rickettsia prowazekii (strain Madrid E).